Consider the following 217-residue polypeptide: MGQKINPIGLRVGIIRDWEAKWYAEKDFASLLHEDLKIRKFIDNELKEASVSHVEIERAANRINIAIHTGKPGMVIGKGGSEIEKLRNKLNALTDKKVHINVIEIKKVDLDARLVAENIARQLENRASFRRVQKQAITRAMKLGAKGIKTQISGRLGGADIARAEQYSEGTVPLHTLRADIDYAHAEADTTYGKLGVKVWIYRGEVLPTKNTSGGGK.

The region spanning 38–106 (IRKFIDNELK…KVHINVIEIK (69 aa)) is the KH type-2 domain.

This sequence belongs to the universal ribosomal protein uS3 family. Part of the 30S ribosomal subunit. Forms a tight complex with proteins S10 and S14.

In terms of biological role, binds the lower part of the 30S subunit head. Binds mRNA in the 70S ribosome, positioning it for translation. In Staphylococcus aureus (strain COL), this protein is Small ribosomal subunit protein uS3 (rpsC).